A 598-amino-acid polypeptide reads, in one-letter code: Nuclear receptor subfamily 4 group A member 2 (598 aa).

Residues 1 to 22 (MPCVQAQYGSSPQGASPASQSY) are disordered. Low complexity predominate over residues 8–22 (YGSSPQGASPASQSY). The nuclear receptor DNA-binding region spans 260–335 (EGLCAVCGDN…VGMVKEVVRT (76 aa)). NR C4-type zinc fingers lie at residues 263 to 283 (CAVCGDNAACQHYGVRTCEGC) and 299 to 323 (CLANKNCPVDKRRRNRCQYCRFQKC). The Bipartite nuclear localization signal (NLS1) signature appears at 287–314 (FKRTVQKNAKYVCLANKNCPVDKRRRNR). Residues 337–361 (SLKGRRGRLPSKPKSPQDPSPPSPP) form a disordered region. The Nuclear localization signal (NLS1) motif lies at 338 to 350 (LKGRRGRLPSKPK). Residues 352 to 361 (PQDPSPPSPP) are compositionally biased toward pro residues. The 236-residue stretch at 360–595 (PPVSLISALV…AIIDKLFLDT (236 aa)) folds into the NR LBD domain. The nuclear export sequence (NES1) motif lies at 443 to 452 (FLELFVLRLA). Residues 568 to 577 (QGLQRIFYLK) carry the nuclear export sequence (NES2) motif.

Belongs to the nuclear hormone receptor family. NR4 subfamily. As to quaternary structure, interacts with SFPQ, NCOR2, SIN3A and HADC1. The interaction with NCOR2 increases in the absence of PITX3. Interacts with PER2. Brain.

Its subcellular location is the cytoplasm. It is found in the nucleus. In terms of biological role, transcriptional regulator which is important for the differentiation and maintenance of meso-diencephalic dopaminergic (mdDA) neurons during development. It is crucial for expression of a set of genes such as SLC6A3, SLC18A2, TH and DRD2 which are essential for development of mdDA neurons. The polypeptide is Nuclear receptor subfamily 4 group A member 2 (Nr4a2) (Mus musculus (Mouse)).